We begin with the raw amino-acid sequence, 175 residues long: Vesicle-associated membrane protein-associated protein SCS22 (175 aa).

Positions 1-125 (MRIVPEKLVF…DDIVFKKIKI (125 aa)) constitute an MSP domain. Over 1–154 (MRIVPEKLVF…RAPSAGNGQS (154 aa)) the chain is Cytoplasmic. Residues 133–152 (RKPSGNHDAESARAPSAGNG) are disordered. A helical; Anchor for type IV membrane protein transmembrane segment spans residues 155–175 (LSSRALLIITVIALLVGWIYY).

Belongs to the VAMP-associated protein (VAP) (TC 9.B.17) family.

Its subcellular location is the membrane. Functionally, targets proteins containing a FFAT motif to membranes. Involved in regulation of phospholipid metabolism. This Saccharomyces cerevisiae (strain ATCC 204508 / S288c) (Baker's yeast) protein is Vesicle-associated membrane protein-associated protein SCS22 (SCS22).